Consider the following 246-residue polypeptide: 4-hydroxy-tetrahydrodipicolinate reductase (246 aa).

NAD(+) is bound at residue 7–12 (GCSGRM). Residue R34 participates in NADP(+) binding. NAD(+) is bound by residues 76–78 (ATT) and 102–105 (CPNT). H135 functions as the Proton donor/acceptor in the catalytic mechanism. A (S)-2,3,4,5-tetrahydrodipicolinate-binding site is contributed by H136. The active-site Proton donor is K139. 145 to 146 (GT) contributes to the (S)-2,3,4,5-tetrahydrodipicolinate binding site.

It belongs to the DapB family.

It localises to the cytoplasm. The catalysed reaction is (S)-2,3,4,5-tetrahydrodipicolinate + NAD(+) + H2O = (2S,4S)-4-hydroxy-2,3,4,5-tetrahydrodipicolinate + NADH + H(+). It carries out the reaction (S)-2,3,4,5-tetrahydrodipicolinate + NADP(+) + H2O = (2S,4S)-4-hydroxy-2,3,4,5-tetrahydrodipicolinate + NADPH + H(+). Its pathway is amino-acid biosynthesis; L-lysine biosynthesis via DAP pathway; (S)-tetrahydrodipicolinate from L-aspartate: step 4/4. Functionally, catalyzes the conversion of 4-hydroxy-tetrahydrodipicolinate (HTPA) to tetrahydrodipicolinate. In Chlamydia felis (strain Fe/C-56) (Chlamydophila felis), this protein is 4-hydroxy-tetrahydrodipicolinate reductase.